The following is a 512-amino-acid chain: Allene oxide synthase 1, chloroplastic (512 aa).

The transit peptide at 1–25 (MATAAACISFASPSPARVVIRRQTR) directs the protein to the chloroplast. Residues 23–43 (QTRASASASATDRQEVVSPKR) are disordered. The heme b site is built by K127, H158, and K162. N315 contributes to the (13S)-hydroperoxy-(9Z,11E,15Z)-octadecatrienoate binding site. Residues K463 and C465 each contribute to the heme b site.

Belongs to the cytochrome P450 family. Heme b is required as a cofactor. In terms of tissue distribution, expressed in coleoptiles, and at lower level in leaves of dark-grown seedlings.

The protein localises to the plastid. It localises to the chloroplast membrane. The catalysed reaction is (13S)-hydroperoxy-(9Z,11E,15Z)-octadecatrienoate = (9Z,13S,15Z)-12,13-epoxyoctadeca-9,11,15-trienoate + H2O. The protein operates within lipid metabolism; oxylipin biosynthesis. In terms of biological role, involved in the biosynthesis of jasmonic acid, a growth regulator that is implicated also as a signaling molecule in plant defense. Converts 13-hydroperoxylinolenic acid to 12,13-epoxylinolenic acid. In Oryza sativa subsp. japonica (Rice), this protein is Allene oxide synthase 1, chloroplastic (CYP74A1).